A 95-amino-acid polypeptide reads, in one-letter code: Aspartyl/glutamyl-tRNA(Asn/Gln) amidotransferase subunit C (95 aa).

It belongs to the GatC family. Heterotrimer of A, B and C subunits.

It carries out the reaction L-glutamyl-tRNA(Gln) + L-glutamine + ATP + H2O = L-glutaminyl-tRNA(Gln) + L-glutamate + ADP + phosphate + H(+). It catalyses the reaction L-aspartyl-tRNA(Asn) + L-glutamine + ATP + H2O = L-asparaginyl-tRNA(Asn) + L-glutamate + ADP + phosphate + 2 H(+). In terms of biological role, allows the formation of correctly charged Asn-tRNA(Asn) or Gln-tRNA(Gln) through the transamidation of misacylated Asp-tRNA(Asn) or Glu-tRNA(Gln) in organisms which lack either or both of asparaginyl-tRNA or glutaminyl-tRNA synthetases. The reaction takes place in the presence of glutamine and ATP through an activated phospho-Asp-tRNA(Asn) or phospho-Glu-tRNA(Gln). In Rhizobium rhizogenes (strain K84 / ATCC BAA-868) (Agrobacterium radiobacter), this protein is Aspartyl/glutamyl-tRNA(Asn/Gln) amidotransferase subunit C.